The chain runs to 361 residues: Peptide chain release factor 1 (361 aa).

Q240 bears the N5-methylglutamine mark.

The protein belongs to the prokaryotic/mitochondrial release factor family. Post-translationally, methylated by PrmC. Methylation increases the termination efficiency of RF1.

It is found in the cytoplasm. In terms of biological role, peptide chain release factor 1 directs the termination of translation in response to the peptide chain termination codons UAG and UAA. This Mycobacterium leprae (strain Br4923) protein is Peptide chain release factor 1.